Reading from the N-terminus, the 162-residue chain is MKIVVIQGPNLNMLGIREQNIYGPMKLEDIHKQMKGFAEQNKLEIEFFQSNLEGEIVDRIQECIGDADGIIINPAAYTHTSIAIRDAIAAVQLPTLEVHLSNIHQREEFRHKSLIAPVCAGQIVGMGPFGYHLAMVGMTQILSEVAAMREQQAKAQAAAQQK.

The Proton acceptor role is filled by Y22. N73, H79, and D86 together coordinate substrate. Residue H99 is the Proton donor of the active site. Substrate is bound by residues 100 to 101 (LS) and R110.

It belongs to the type-II 3-dehydroquinase family. As to quaternary structure, homododecamer.

The catalysed reaction is 3-dehydroquinate = 3-dehydroshikimate + H2O. The protein operates within metabolic intermediate biosynthesis; chorismate biosynthesis; chorismate from D-erythrose 4-phosphate and phosphoenolpyruvate: step 3/7. Catalyzes a trans-dehydration via an enolate intermediate. The chain is 3-dehydroquinate dehydratase from Sulfurovum sp. (strain NBC37-1).